The following is a 230-amino-acid chain: Orotidine 5'-phosphate decarboxylase (230 aa).

Residues D12, K34, 61–70 (DMKLLDIDNT), T116, R177, Q186, and R207 contribute to the substrate site. Residue K63 is the Proton donor of the active site.

Belongs to the OMP decarboxylase family. Type 1 subfamily. In terms of assembly, homodimer.

The catalysed reaction is orotidine 5'-phosphate + H(+) = UMP + CO2. It participates in pyrimidine metabolism; UMP biosynthesis via de novo pathway; UMP from orotate: step 2/2. Catalyzes the decarboxylation of orotidine 5'-monophosphate (OMP) to uridine 5'-monophosphate (UMP). This Rhizobium rhizogenes (strain K84 / ATCC BAA-868) (Agrobacterium radiobacter) protein is Orotidine 5'-phosphate decarboxylase.